Here is a 179-residue protein sequence, read N- to C-terminus: UPF0200 protein TV0279 (179 aa).

6 to 13 serves as a coordination point for ATP; the sequence is GMPGAGKD.

The protein belongs to the UPF0200 family.

This is UPF0200 protein TV0279 from Thermoplasma volcanium (strain ATCC 51530 / DSM 4299 / JCM 9571 / NBRC 15438 / GSS1).